Consider the following 372-residue polypeptide: Chorismate synthase (372 aa).

Position 48 (R48) interacts with NADP(+). Residues 125-127 (RSS), G285, 300-304 (KPTPS), and R327 contribute to the FMN site.

The protein belongs to the chorismate synthase family. Requires FMNH2 as cofactor.

It catalyses the reaction 5-O-(1-carboxyvinyl)-3-phosphoshikimate = chorismate + phosphate. The protein operates within metabolic intermediate biosynthesis; chorismate biosynthesis; chorismate from D-erythrose 4-phosphate and phosphoenolpyruvate: step 7/7. Its function is as follows. Catalyzes the anti-1,4-elimination of the C-3 phosphate and the C-6 proR hydrogen from 5-enolpyruvylshikimate-3-phosphate (EPSP) to yield chorismate, which is the branch point compound that serves as the starting substrate for the three terminal pathways of aromatic amino acid biosynthesis. This reaction introduces a second double bond into the aromatic ring system. The protein is Chorismate synthase of Methanocella arvoryzae (strain DSM 22066 / NBRC 105507 / MRE50).